Here is a 472-residue protein sequence, read N- to C-terminus: ATP-dependent rRNA helicase rrp3 (472 aa).

Residues 1-51 (MPDVKKRKIAHEAPEHGSDAESTSSHESVAQQDDTAETQDEAAATETRPAP) form a disordered region. Basic and acidic residues predominate over residues 10-19 (AHEAPEHGSD). Residues 20–29 (AESTSSHESV) are compositionally biased toward polar residues. The Q motif motif lies at 52-80 (KSFKDLGIIDQLCEACETMGYKAPTPIQA). In terms of domain architecture, Helicase ATP-binding spans 83–254 (IPLALQGRDL…RASLSNPLRV (172 aa)). Position 96–103 (96–103 (AETGSGKT)) interacts with ATP. The short motif at 202-205 (DEAD) is the DEAD box element. One can recognise a Helicase C-terminal domain in the interval 282-426 (YLVYLLNEFV…EYELEKDEVM (145 aa)). The segment at 451–472 (GTKAKKFGKGKRSRDEMDQEEG) is disordered. Over residues 452–462 (TKAKKFGKGKR) the composition is skewed to basic residues.

The protein belongs to the DEAD box helicase family. DDX47/RRP3 subfamily. Interacts with the SSU processome.

The protein localises to the nucleus. It catalyses the reaction ATP + H2O = ADP + phosphate + H(+). Its function is as follows. ATP-dependent rRNA helicase required for pre-ribosomal RNA processing. Involved in the maturation of the 35S-pre-rRNA and to its cleavage to mature 18S rRNA. The sequence is that of ATP-dependent rRNA helicase rrp3 from Neosartorya fischeri (strain ATCC 1020 / DSM 3700 / CBS 544.65 / FGSC A1164 / JCM 1740 / NRRL 181 / WB 181) (Aspergillus fischerianus).